Here is a 343-residue protein sequence, read N- to C-terminus: tRNA-specific 2-thiouridylase MnmA (343 aa).

ATP is bound by residues 7–14 (ALSGGVDS) and Met33. Residue Cys87 is the Nucleophile of the active site. A disulfide bond links Cys87 and Cys184. Gly111 provides a ligand contact to ATP. An interaction with tRNA region spans residues 135–137 (KDQ). Cys184 functions as the Cysteine persulfide intermediate in the catalytic mechanism. The segment at 289 to 290 (RY) is interaction with tRNA.

The protein belongs to the MnmA/TRMU family.

The protein localises to the cytoplasm. The catalysed reaction is S-sulfanyl-L-cysteinyl-[protein] + uridine(34) in tRNA + AH2 + ATP = 2-thiouridine(34) in tRNA + L-cysteinyl-[protein] + A + AMP + diphosphate + H(+). Catalyzes the 2-thiolation of uridine at the wobble position (U34) of tRNA, leading to the formation of s(2)U34. The sequence is that of tRNA-specific 2-thiouridylase MnmA from Desulforudis audaxviator (strain MP104C).